A 648-amino-acid polypeptide reads, in one-letter code: Beta-glucuronidase (648 aa).

An N-terminal signal peptide occupies residues 1–19 (GLAMAWAVLGPLLWGCALA). N-linked (GlcNAc...) asparagine glycosylation is found at Asn170, Asn269, and Asn417. The active-site Proton donor is the Glu448. A glycan (N-linked (GlcNAc...) asparagine) is linked at Asn628.

The protein belongs to the glycosyl hydrolase 2 family. Homotetramer.

The protein resides in the lysosome. It catalyses the reaction a beta-D-glucuronoside + H2O = D-glucuronate + an alcohol. Its activity is regulated as follows. Inhibited by L-aspartic acid. Plays an important role in the degradation of dermatan and keratan sulfates. This is Beta-glucuronidase (GUSB) from Chlorocebus aethiops (Green monkey).